We begin with the raw amino-acid sequence, 281 residues long: Complement C1q tumor necrosis factor-related protein 1 (281 aa).

An N-terminal signal peptide occupies residues 1-25; the sequence is MGSCAQGFMLGCCLLLAITWGPILS. A disordered region spans residues 35–68; it reads QEWEETEELPSPLDPVTRPEETREKYSPRQGEDL. A compositionally biased stretch (basic and acidic residues) spans 51–66; sequence TRPEETREKYSPRQGE. N-linked (GlcNAc...) asparagine glycosylation occurs at Asn-93. One can recognise a Collagen-like domain in the interval 99-140; sequence GEKGDRGDRGLQGKYGKIGSTGPRGHVGPKGQKGSIGAPGNH. Positions 107-136 are disordered; it reads RGLQGKYGKIGSTGPRGHVGPKGQKGSIGA. Residues 141-281 form the C1q domain; the sequence is CKSQYAAFSV…GYLVKPASEP (141 aa).

It is found in the secreted. This chain is Complement C1q tumor necrosis factor-related protein 1 (C1qtnf1), found in Mus musculus (Mouse).